The primary structure comprises 116 residues: Ribosome-binding factor A (116 aa).

It belongs to the RbfA family. In terms of assembly, monomer. Binds 30S ribosomal subunits, but not 50S ribosomal subunits or 70S ribosomes.

It localises to the cytoplasm. Functionally, one of several proteins that assist in the late maturation steps of the functional core of the 30S ribosomal subunit. Associates with free 30S ribosomal subunits (but not with 30S subunits that are part of 70S ribosomes or polysomes). Required for efficient processing of 16S rRNA. May interact with the 5'-terminal helix region of 16S rRNA. The sequence is that of Ribosome-binding factor A from Levilactobacillus brevis (strain ATCC 367 / BCRC 12310 / CIP 105137 / JCM 1170 / LMG 11437 / NCIMB 947 / NCTC 947) (Lactobacillus brevis).